A 513-amino-acid polypeptide reads, in one-letter code: ATP synthase subunit alpha (513 aa).

169-176 (GDRQCGKT) contributes to the ATP binding site.

The protein belongs to the ATPase alpha/beta chains family. F-type ATPases have 2 components, CF(1) - the catalytic core - and CF(0) - the membrane proton channel. CF(1) has five subunits: alpha(3), beta(3), gamma(1), delta(1), epsilon(1). CF(0) has three main subunits: a(1), b(2) and c(9-12). The alpha and beta chains form an alternating ring which encloses part of the gamma chain. CF(1) is attached to CF(0) by a central stalk formed by the gamma and epsilon chains, while a peripheral stalk is formed by the delta and b chains.

It is found in the cell inner membrane. It catalyses the reaction ATP + H2O + 4 H(+)(in) = ADP + phosphate + 5 H(+)(out). Its function is as follows. Produces ATP from ADP in the presence of a proton gradient across the membrane. The alpha chain is a regulatory subunit. This is ATP synthase subunit alpha from Burkholderia ambifaria (strain MC40-6).